The chain runs to 116 residues: Cation channel sperm-associated auxiliary subunit TMEM262 (116 aa).

Over 1–16 (MRWRDRIAVLCFPPGL) the chain is Cytoplasmic. The chain crosses the membrane as a helical span at residues 17-38 (MLTVAALILFFIHMGVFASDVH). At 39–51 (NFCVIHNYDHMSF) the chain is on the extracellular side. The helical transmembrane segment at 52 to 72 (RYTVVLIFSQVISIGWAAMGS) threads the bilayer. Over 73–84 (LYAEMTGDKFLR) the chain is Cytoplasmic. A helical membrane pass occupies residues 85-107 (CFALTILILNGAMFFNRLCLEFL). The Extracellular segment spans residues 108-116 (AINYREERH).

Component of the CatSper complex or CatSpermasome composed of the core pore-forming members CATSPER1, CATSPER2, CATSPER3 and CATSPER4 as well as auxiliary members CATSPERB, CATSPERG, CATSPERD, CATSPERE, CATSPERZ, C2CD6/CATSPERT, SLCO6C1, TMEM249, TMEM262 and EFCAB9. HSPA1 may be an additional auxiliary complex member. The core complex members CATSPER1, CATSPER2, CATSPER3 and CATSPER4 form a heterotetrameric channel. The auxiliary CATSPERB, CATSPERG2, CATSPERD and CATSPERE subunits form a pavilion-like structure over the pore which stabilizes the complex through interactions with CATSPER4, CATSPER3, CATSPER1 and CATSPER2 respectively. SLCO6C1 interacts with CATSPERE and TMEM262/CATSPERH interacts with CATSPERB, further stabilizing the complex. C2CD6/CATSPERT interacts at least with CATSPERD and is required for targeting the CatSper complex in the flagellar membrane.

The protein localises to the cell projection. It localises to the cilium. The protein resides in the flagellum membrane. Auxiliary component of the CatSper complex, a complex involved in sperm cell hyperactivation. The sequence is that of Cation channel sperm-associated auxiliary subunit TMEM262 from Mus musculus (Mouse).